We begin with the raw amino-acid sequence, 337 residues long: Inner membrane protein YhjD (337 aa).

The span at 1–29 shows a compositional bias: basic and acidic residues; it reads MTQENEIKRPIQDLEHEPIKPLDNSEKGS. Positions 1–31 are disordered; the sequence is MTQENEIKRPIQDLEHEPIKPLDNSEKGSKV. Over 1–74 the chain is Cytoplasmic; that stretch reads MTQENEIKRP…LGNQFGAAIT (74 aa). Residues 75–97 form a helical membrane-spanning segment; the sequence is YFSFLSMIPILMVSFAAGGFVLA. Residues 98–133 lie on the Periplasmic side of the membrane; that stretch reads SHPMLLQDIFDKILQNISDPTLAATLKNTINTAVQQ. Residues 134 to 156 traverse the membrane as a helical segment; the sequence is RTTVGLVGLAVALYSGINWMGNL. Topologically, residues 157-185 are cytoplasmic; that stretch reads REAIRAQSRDVWERSPQDQEKFWVKYLRD. The chain crosses the membrane as a helical span at residues 186–208; it reads FISLIGLLIALIVTLSITSVAGS. Topologically, residues 209-227 are periplasmic; sequence AQQMIISALHLNSIEWLKP. A helical membrane pass occupies residues 228 to 250; sequence TWRLIGLAISIFANYLLFFWIFW. Residues 251–261 are Cytoplasmic-facing; the sequence is RLPRHRPRKKA. A helical transmembrane segment spans residues 262 to 284; that stretch reads LIRGTFLAAIGFEVIKIVMTYTL. Topologically, residues 285-298 are periplasmic; that stretch reads PSLMKSPSGAAFGS. A helical membrane pass occupies residues 299–321; it reads VLGLMAFFYFFARLTLFCAAWIA. Topologically, residues 322–337 are cytoplasmic; that stretch reads TAEYKDDPRMPGKTQP.

It is found in the cell inner membrane. The polypeptide is Inner membrane protein YhjD (yhjD) (Escherichia coli (strain K12)).